The sequence spans 276 residues: Protein G1 (276 aa).

Disordered stretches follow at residues 1–30 (MSSS…SQKR) and 178–213 (SYHK…ATAP). Basic and acidic residues predominate over residues 21 to 30 (RPSRYESQKR). The 160-residue stretch at 24–183 (RYESQKRRDW…ARGISYHKKK (160 aa)) folds into the ALOG domain. Positions 178–187 (SYHKKKKRRG) are enriched in basic residues. Residues 181-185 (KKKKR) carry the Nuclear localization signal motif. The segment covering 189–202 (NMNGARGGGGGGAR) has biased composition (gly residues). Positions 203-213 (AGVNDGDATAP) are enriched in low complexity.

This sequence belongs to the plant homeotic and developmental regulators ALOG protein family. Expressed at the empty glumes of immature spikelets, which are lemmas of the sterile florets located at the lateral side of the spikelet, throughout their development.

The protein localises to the nucleus. Its function is as follows. Probable transcription regulator that acts as a developmental regulator by promoting cell growth in response to light. Transcription regulator that restrains empty glumes growth, lemmas of the sterile florets located at the lateral side of the rice spikelet, to maintain their small size, probably by repressing lemma identity via transcription regulation. The protein is Protein G1 (G1) of Oryza sativa subsp. japonica (Rice).